We begin with the raw amino-acid sequence, 873 residues long: Serine/threonine-protein phosphatase 4 regulatory subunit 4 (873 aa).

HEAT repeat units lie at residues Ile-213–Val-251, Val-252–Thr-290, and Asn-392–Leu-427. A coiled-coil region spans residues Gln-686 to Asp-720. Residues Glu-713–Lys-737 are compositionally biased toward basic and acidic residues. A disordered region spans residues Glu-713–Lys-766. Residues Ile-747 to Ser-762 are compositionally biased toward low complexity. Residue Ser-775 is modified to Phosphoserine. Phosphothreonine is present on Thr-797. Polar residues predominate over residues Thr-822–Asp-858. Residues Thr-822–Pro-873 are disordered. A compositionally biased stretch (basic residues) spans Ala-864–Pro-873.

As to quaternary structure, serine/threonine-protein phosphatase 4 (PP4) occurs in different assemblies of the catalytic and one or more regulatory subunits. Component of the PP4 complex PPP4C-PPP4R4.

It is found in the cytoplasm. Functionally, putative regulatory subunit of serine/threonine-protein phosphatase 4. The chain is Serine/threonine-protein phosphatase 4 regulatory subunit 4 (PPP4R4) from Homo sapiens (Human).